The primary structure comprises 55 residues: Large ribosomal subunit protein bL33 (55 aa).

In terms of processing, the protein is methylated on either Ala-2 or Lys-3.

The protein is Large ribosomal subunit protein bL33 of Rhodopseudomonas palustris (strain ATCC BAA-98 / CGA009).